We begin with the raw amino-acid sequence, 962 residues long: Splicing regulator ARVCF (962 aa).

A coiled-coil region spans residues 8 to 46; sequence SAASILASVKEQEARFERLTRALEQERRHVALQLERAQQ. The tract at residues 95-122 is disordered; it reads TVEEDPGTPTSHVSIVTSEDGTTRRTET. Phosphothreonine is present on residues Thr102 and Thr104. A compositionally biased stretch (polar residues) spans 102 to 114; that stretch reads TPTSHVSIVTSED. At Arg170 the chain carries Omega-N-methylarginine. Disordered regions lie at residues 186–253 and 266–290; these read GGGF…LPER and RSLA…RRRP. Residues 206 to 217 are compositionally biased toward low complexity; the sequence is RGLGMRPPRAGP. Ser267 carries the phosphoserine modification. Acidic residues predominate over residues 270–280; sequence ADDEGGPELEP. Residues Ser332, Ser335, Ser343, and Ser345 each carry the phosphoserine modification. 6 ARM repeats span residues 348 to 387, 390 to 429, 433 to 467, 468 to 508, 526 to 565, and 575 to 622; these read SARK…HLCF, EGVK…NLSY, TDNK…VTGT, LWNL…NEDS, LRNV…DTDN, and MRNL…GKKA. Residues 590–614 are disordered; that stretch reads DRYQEAEPGPLGSAVGSQRRRRDDA. Ser606 is subject to Phosphoserine. Residues 607–623 carry the Nuclear localization signal motif; sequence QRRRRDDASCFGGKKAK. Thr642 bears the Phosphothreonine mark. ARM repeat units follow at residues 646-686, 699-738, 739-781, and 782-826; these read PKRT…AAGA, TYIR…NLSL, DRRN…AVLN, and TIHE…SHVL. A required for interaction with RNA-binding proteins DDX5, HNRNPH2 and SRSF1 and with mRNAs region spans residues 776 to 962; sequence VVAVLNTIHE…AKPQPVDSWV (187 aa). The interval 854-962 is disordered; the sequence is ATAKGPKGAL…AKPQPVDSWV (109 aa). A phosphoserine mark is found at Ser864 and Ser871. Thr872 bears the Phosphothreonine mark. Residues 878–887 show a composition bias toward basic and acidic residues; it reads KSLEGEKTGS. Phosphoserine is present on Ser915. Residues 920–932 are compositionally biased toward basic and acidic residues; that stretch reads ASEKEPLKLDPSR.

Belongs to the beta-catenin family. In terms of assembly, component of a ribonucleoprotein complex containing mRNAs and RNA-binding proteins including DDX5, HNRNPH2 and SRSF1 as well as ARVCF. Interacts (via the extreme C-terminus) with FRMPD2 (via the PDZ 2 domain). Interacts with CCDC85B. As to expression, found in all the examined tissues including heart, brain, liver and kidney. Found at low level in lung. Expressed in dermal connective tissue, salivary gland duct and in the corneal layer (at protein level). Expressed in arrector pili muscle (at protein level). High levels detected in epithelial cells with lower levels found in fibroblasts and T lymphocytes.

It localises to the cell junction. The protein localises to the adherens junction. The protein resides in the nucleus. It is found in the cytoplasm. Functionally, contributes to the regulation of alternative splicing of pre-mRNAs. The sequence is that of Splicing regulator ARVCF from Homo sapiens (Human).